We begin with the raw amino-acid sequence, 199 residues long: Superoxide dismutase [Fe] (199 aa).

The Fe cation site is built by His27, His79, Asp161, and His165.

This sequence belongs to the iron/manganese superoxide dismutase family. As to quaternary structure, homodimer. The cofactor is Fe cation.

It carries out the reaction 2 superoxide + 2 H(+) = H2O2 + O2. Functionally, destroys superoxide anion radicals which are normally produced within the cells and which are toxic to biological systems. This Synechocystis sp. (strain ATCC 27184 / PCC 6803 / Kazusa) protein is Superoxide dismutase [Fe] (sodB).